The primary structure comprises 304 residues: Ornithine carbamoyltransferase (304 aa).

Carbamoyl phosphate is bound by residues 47–50, arginine 98, and 125–128; these read STRT and HPCQ. Residues asparagine 156, aspartate 221, and 225–226 each bind L-ornithine; that span reads SM. Carbamoyl phosphate contacts are provided by residues 262 to 263 and arginine 290; that span reads CL.

This sequence belongs to the aspartate/ornithine carbamoyltransferase superfamily. OTCase family.

The protein resides in the cytoplasm. The enzyme catalyses carbamoyl phosphate + L-ornithine = L-citrulline + phosphate + H(+). Its pathway is amino-acid biosynthesis; L-arginine biosynthesis; L-arginine from L-ornithine and carbamoyl phosphate: step 1/3. Its function is as follows. Reversibly catalyzes the transfer of the carbamoyl group from carbamoyl phosphate (CP) to the N(epsilon) atom of ornithine (ORN) to produce L-citrulline. This is Ornithine carbamoyltransferase from Methanococcus maripaludis (strain C5 / ATCC BAA-1333).